Here is a 513-residue protein sequence, read N- to C-terminus: Probable metalloreductase AIM14 (513 aa).

7 helical membrane-spanning segments follow: residues 22 to 42 (GYII…AHFL), 66 to 86 (PFWV…FTNV), 103 to 123 (LAFC…LLGQ), 138 to 158 (LIIL…TIHH), 166 to 186 (WANL…IVSS), 193 to 213 (FYSY…LLMI), and 219 to 239 (GVSD…ASRV). In terms of domain architecture, Ferric oxidoreductase spans 100-211 (LGRLAFCLVP…NFTVALFVLL (112 aa)). An FAD-binding FR-type domain is found at 240 to 368 (YNGYSVPGLT…GIPLYEYFDN (129 aa)).

Belongs to the ferric reductase (FRE) family. AIM14 subfamily.

Its subcellular location is the membrane. Its function is as follows. Probable cell surface metalloreductase. May be involved in iron or copper homeostasis. The protein is Probable metalloreductase AIM14 (AIM14) of Clavispora lusitaniae (strain ATCC 42720) (Yeast).